Consider the following 280-residue polypeptide: Manganese import system permease protein ScaB (280 aa).

The next 8 membrane-spanning stretches (helical) occupy residues 18–38 (ALIT…FIIL), 61–81 (ILGI…SILI), 94–114 (TAIG…IGVA), 139–159 (TIGV…PLLL), 174–194 (VKIY…TAMQ), 196–216 (VGTI…YLYA), 222–242 (MMLL…FIGY), and 246–266 (IAVG…SFFI).

Belongs to the ABC-3 integral membrane protein family.

It localises to the cell membrane. Functionally, part of an ABC transporter complex involved in manganese import. The chain is Manganese import system permease protein ScaB from Streptococcus parasanguinis.